An 80-amino-acid polypeptide reads, in one-letter code: Putative membrane protein insertion efficiency factor (80 aa).

The protein belongs to the UPF0161 family.

It localises to the cell membrane. Could be involved in insertion of integral membrane proteins into the membrane. The protein is Putative membrane protein insertion efficiency factor of Corynebacterium jeikeium (strain K411).